Reading from the N-terminus, the 119-residue chain is Albumin-1 (119 aa).

A signal peptide spans 1–19 (MAVFLLATSTIMFPTKIEA). Cystine bridges form between cysteine 22-cysteine 39, cysteine 26-cysteine 41, and cysteine 34-cysteine 51. 2 propeptides span residues 57-64 (LSSVAKMI) and 117-119 (TTK).

The C-terminal glycine may be removed from A1b.

Functionally, A1b binds to basic 7S globulin (BG) and stimulates its phosphorylation activity. Involved in the signal transduction system to regulate the growth and differentiation as a hormone peptide. The chain is Albumin-1 from Glycine max (Soybean).